Consider the following 182-residue polypeptide: Protein GrpE (182 aa).

It belongs to the GrpE family. As to quaternary structure, homodimer.

The protein localises to the cytoplasm. Functionally, participates actively in the response to hyperosmotic and heat shock by preventing the aggregation of stress-denatured proteins, in association with DnaK and GrpE. It is the nucleotide exchange factor for DnaK and may function as a thermosensor. Unfolded proteins bind initially to DnaJ; upon interaction with the DnaJ-bound protein, DnaK hydrolyzes its bound ATP, resulting in the formation of a stable complex. GrpE releases ADP from DnaK; ATP binding to DnaK triggers the release of the substrate protein, thus completing the reaction cycle. Several rounds of ATP-dependent interactions between DnaJ, DnaK and GrpE are required for fully efficient folding. The protein is Protein GrpE of Aquifex aeolicus (strain VF5).